A 194-amino-acid polypeptide reads, in one-letter code: Putative 3-methyladenine DNA glycosylase (194 aa).

The protein belongs to the DNA glycosylase MPG family.

This chain is Putative 3-methyladenine DNA glycosylase, found in Anaeromyxobacter sp. (strain Fw109-5).